A 488-amino-acid polypeptide reads, in one-letter code: Protein nucleotidyltransferase YdiU (488 aa).

The ATP site is built by Gly91, Gly93, Arg94, Lys114, Asp126, Gly127, Arg177, and Arg184. The Proton acceptor role is filled by Asp253. Positions 254 and 263 each coordinate Mg(2+). Asp263 serves as a coordination point for ATP.

It belongs to the SELO family. The cofactor is Mg(2+). Mn(2+) is required as a cofactor.

It catalyses the reaction L-seryl-[protein] + ATP = 3-O-(5'-adenylyl)-L-seryl-[protein] + diphosphate. It carries out the reaction L-threonyl-[protein] + ATP = 3-O-(5'-adenylyl)-L-threonyl-[protein] + diphosphate. The enzyme catalyses L-tyrosyl-[protein] + ATP = O-(5'-adenylyl)-L-tyrosyl-[protein] + diphosphate. The catalysed reaction is L-histidyl-[protein] + UTP = N(tele)-(5'-uridylyl)-L-histidyl-[protein] + diphosphate. It catalyses the reaction L-seryl-[protein] + UTP = O-(5'-uridylyl)-L-seryl-[protein] + diphosphate. It carries out the reaction L-tyrosyl-[protein] + UTP = O-(5'-uridylyl)-L-tyrosyl-[protein] + diphosphate. Nucleotidyltransferase involved in the post-translational modification of proteins. It can catalyze the addition of adenosine monophosphate (AMP) or uridine monophosphate (UMP) to a protein, resulting in modifications known as AMPylation and UMPylation. The protein is Protein nucleotidyltransferase YdiU of Bacillus thuringiensis (strain Al Hakam).